The primary structure comprises 162 residues: Transcription regulatory protein motB (162 aa).

In terms of assembly, monomer. Homodimer.

Functionally, compacts the host nucleoid. Probably dysregulates hundreds of host genes including derepression of most of the H-NS regulon. Plays a role in the transcriptional regulation of middle promoters. In Enterobacteria phage T4 (Bacteriophage T4), this protein is Transcription regulatory protein motB (motB).